The primary structure comprises 449 residues: Gamma-glutamyl phosphate reductase (449 aa).

This sequence belongs to the gamma-glutamyl phosphate reductase family.

It is found in the cytoplasm. The catalysed reaction is L-glutamate 5-semialdehyde + phosphate + NADP(+) = L-glutamyl 5-phosphate + NADPH + H(+). It functions in the pathway amino-acid biosynthesis; L-proline biosynthesis; L-glutamate 5-semialdehyde from L-glutamate: step 2/2. Its function is as follows. Catalyzes the NADPH-dependent reduction of L-glutamate 5-phosphate into L-glutamate 5-semialdehyde and phosphate. The product spontaneously undergoes cyclization to form 1-pyrroline-5-carboxylate. This is Gamma-glutamyl phosphate reductase from Methanococcoides burtonii (strain DSM 6242 / NBRC 107633 / OCM 468 / ACE-M).